The sequence spans 182 residues: Probable tail terminator protein (182 aa).

The protein localises to the virion. It localises to the host cytoplasm. Its function is as follows. May stop tail tube polymerization by capping the rapidly polymerizing tail tube once it has reached its requisite length and prevent its depolymerization. This chain is Probable tail terminator protein, found in Enterobacteriaceae (Bacteriophage Mu).